Here is a 384-residue protein sequence, read N- to C-terminus: tRNA(Met) cytidine acetate ligase (384 aa).

ATP-binding positions include 7–20 (VAEY…HEFL), Gly-101, Asn-153, and Arg-178.

This sequence belongs to the TmcAL family.

It is found in the cytoplasm. The catalysed reaction is cytidine(34) in elongator tRNA(Met) + acetate + ATP = N(4)-acetylcytidine(34) in elongator tRNA(Met) + AMP + diphosphate. Functionally, catalyzes the formation of N(4)-acetylcytidine (ac(4)C) at the wobble position of elongator tRNA(Met), using acetate and ATP as substrates. First activates an acetate ion to form acetyladenylate (Ac-AMP) and then transfers the acetyl group to tRNA to form ac(4)C34. The protein is tRNA(Met) cytidine acetate ligase of Lactobacillus delbrueckii subsp. bulgaricus (strain ATCC BAA-365 / Lb-18).